The following is a 474-amino-acid chain: Cobyric acid synthase (474 aa).

One can recognise a GATase cobBQ-type domain in the interval Thr251–Tyr431. The Nucleophile role is filled by Cys328. The active site involves His423.

This sequence belongs to the CobB/CobQ family. CobQ subfamily.

Its pathway is cofactor biosynthesis; adenosylcobalamin biosynthesis. Functionally, catalyzes amidations at positions B, D, E, and G on adenosylcobyrinic A,C-diamide. NH(2) groups are provided by glutamine, and one molecule of ATP is hydrogenolyzed for each amidation. The protein is Cobyric acid synthase of Deinococcus radiodurans (strain ATCC 13939 / DSM 20539 / JCM 16871 / CCUG 27074 / LMG 4051 / NBRC 15346 / NCIMB 9279 / VKM B-1422 / R1).